The following is a 125-amino-acid chain: Small ribosomal subunit protein eS8 (125 aa).

Over residues 1 to 11 the composition is skewed to polar residues; that stretch reads MAISQGKSTRL. The segment at 1-38 is disordered; the sequence is MAISQGKSTRLPSGARNVANRGKRKAELGRDPAETRVD. A compositionally biased stretch (basic and acidic residues) spans 25 to 38; the sequence is KAELGRDPAETRVD.

The protein belongs to the eukaryotic ribosomal protein eS8 family. In terms of assembly, part of the 30S ribosomal subunit.

This chain is Small ribosomal subunit protein eS8, found in Methanobrevibacter smithii (strain ATCC 35061 / DSM 861 / OCM 144 / PS).